The following is a 116-amino-acid chain: Iron-sulfur cluster insertion protein ErpA (116 aa).

Residues Cys44, Cys108, and Cys110 each contribute to the iron-sulfur cluster site.

It belongs to the HesB/IscA family. As to quaternary structure, homodimer. Requires iron-sulfur cluster as cofactor.

Functionally, required for insertion of 4Fe-4S clusters for at least IspG. This Pseudomonas fluorescens (strain Pf0-1) protein is Iron-sulfur cluster insertion protein ErpA.